Reading from the N-terminus, the 370-residue chain is MAKSHLPPWLLLLLLPTLCGPGTAVWATSPLACAQGPEFWCQSLEQALQCKALGHCLQEVWGHVGADDLCQECQDIVNILTKMTKEAIFQDTIRKFLEHECDVLPLKLLVPQCHHVLDVYFPLTITYFQSQINAKAICQHLGLCQPGSPEPPLDPLPDKLVLPTLLGALPAKPGPHTQDLSAQRFPIPLPLCWLCRTLLKRIQAMIPKGVLAMAVAQVCHVVPLVVGGICQCLAERYTVILLEVLLGHVLPQLVCGLVLRCSSVDSIGQVPPTLEALPGEWLPQDPECRLCMSVTTQARNISEQTRPQAVYHACLSSQLDKQECEQFVELHTPQLLSLLSRGWDARAICQALGACVATLSPLQCIQSPHF.

Positions 1–24 (MAKSHLPPWLLLLLLPTLCGPGTA) are cleaved as a signal peptide. The propeptide occupies 25–184 (VWATSPLACA…PHTQDLSAQR (160 aa)). The Saposin A-type domain occupies 26–66 (WATSPLACAQGPEFWCQSLEQALQCKALGHCLQEVWGHVGA). 3 Saposin B-type domains span residues 66-148 (ADDL…QPGS), 188-265 (PLPL…SSVD), and 284-359 (QDPE…VATL). Intrachain disulfides connect cysteine 70–cysteine 144, cysteine 73–cysteine 138, cysteine 101–cysteine 113, cysteine 192–cysteine 261, cysteine 195–cysteine 255, cysteine 219–cysteine 230, cysteine 288–cysteine 355, cysteine 291–cysteine 349, and cysteine 314–cysteine 324. The propeptide occupies 264–370 (VDSIGQVPPT…PLQCIQSPHF (107 aa)). Residue asparagine 300 is glycosylated (N-linked (GlcNAc...) asparagine).

Homodimer; disulfide-linked.

It localises to the secreted. The protein localises to the extracellular space. The protein resides in the surface film. Functionally, pulmonary surfactant-associated proteins promote alveolar stability by lowering the surface tension at the air-liquid interface in the peripheral air spaces. SP-B increases the collapse pressure of palmitic acid to nearly 70 millinewtons per meter. In Oryctolagus cuniculus (Rabbit), this protein is Pulmonary surfactant-associated protein B (SFTPB).